The chain runs to 484 residues: Probable cytochrome P450 508A1 (484 aa).

Residues 1 to 21 (MALFEIIISLFVVYIIHNAIS) traverse the membrane as a helical segment. Heme is bound at residue Cys428.

This sequence belongs to the cytochrome P450 family. The cofactor is heme.

The protein resides in the membrane. This Dictyostelium discoideum (Social amoeba) protein is Probable cytochrome P450 508A1 (cyp508A1-1).